The chain runs to 149 residues: Large ribosomal subunit protein bL9 (149 aa).

Belongs to the bacterial ribosomal protein bL9 family.

Functionally, binds to the 23S rRNA. The protein is Large ribosomal subunit protein bL9 of Leptospira interrogans serogroup Icterohaemorrhagiae serovar copenhageni (strain Fiocruz L1-130).